The sequence spans 378 residues: TelA-like protein SAV1406 (378 aa).

This sequence belongs to the TelA family.

This Staphylococcus aureus (strain Mu50 / ATCC 700699) protein is TelA-like protein SAV1406.